A 249-amino-acid polypeptide reads, in one-letter code: Proteasome activator complex subunit 1 (249 aa).

Positions 60 to 102 (PLDIPVPDPVKEKEKEERKKQQEKEEKDEKKKGDEDDKGPPCG) are disordered. Residues 68–98 (PVKEKEKEERKKQQEKEEKDEKKKGDEDDKG) are compositionally biased toward basic and acidic residues.

The protein belongs to the PA28 family. In terms of assembly, heterodimer of PSME1 and PSME2, which forms a hexameric ring. PSME1 can form homoheptamers.

Functionally, implicated in immunoproteasome assembly and required for efficient antigen processing. The PA28 activator complex enhances the generation of class I binding peptides by altering the cleavage pattern of the proteasome. The chain is Proteasome activator complex subunit 1 (Psme1) from Rattus norvegicus (Rat).